The sequence spans 174 residues: MSVVIINTGCANLSSVKYAIHRLGYNPVISTSRREILRSKKIFFPGVGTAHSAMHALKKLNLLNIIKDVQQPFLGICLGMQLLGSYSEESQGMHTLDIINFPVCALKSEKFPVPHNGWNNVEVCKNNILFNGIKNNSKFYFLHSYVVHVNEYTIAKTAYNICFSAAVNKDNFWR.

The Glutamine amidotransferase type-1 domain occupies Ser-2–Arg-174. Cys-77 (nucleophile) is an active-site residue.

In terms of assembly, heterodimer of HisH and HisF.

The protein resides in the cytoplasm. It carries out the reaction 5-[(5-phospho-1-deoxy-D-ribulos-1-ylimino)methylamino]-1-(5-phospho-beta-D-ribosyl)imidazole-4-carboxamide + L-glutamine = D-erythro-1-(imidazol-4-yl)glycerol 3-phosphate + 5-amino-1-(5-phospho-beta-D-ribosyl)imidazole-4-carboxamide + L-glutamate + H(+). The enzyme catalyses L-glutamine + H2O = L-glutamate + NH4(+). Its pathway is amino-acid biosynthesis; L-histidine biosynthesis; L-histidine from 5-phospho-alpha-D-ribose 1-diphosphate: step 5/9. IGPS catalyzes the conversion of PRFAR and glutamine to IGP, AICAR and glutamate. The HisH subunit catalyzes the hydrolysis of glutamine to glutamate and ammonia as part of the synthesis of IGP and AICAR. The resulting ammonia molecule is channeled to the active site of HisF. This is Imidazole glycerol phosphate synthase subunit HisH (hisH) from Buchnera aphidicola subsp. Schlechtendalia chinensis.